The sequence spans 369 residues: Peptide chain release factor 1 (369 aa).

An N5-methylglutamine modification is found at Q234.

This sequence belongs to the prokaryotic/mitochondrial release factor family. In terms of processing, methylated by PrmC. Methylation increases the termination efficiency of RF1.

The protein localises to the cytoplasm. Its function is as follows. Peptide chain release factor 1 directs the termination of translation in response to the peptide chain termination codons UAG and UAA. This is Peptide chain release factor 1 from Kocuria rhizophila (strain ATCC 9341 / DSM 348 / NBRC 103217 / DC2201).